An 824-amino-acid polypeptide reads, in one-letter code: Intraflagellar transport protein 88 homolog (824 aa).

Disordered regions lie at residues 1–27 and 111–134; these read MENV…PAYD and AFDP…DSPE. 11 TPR repeats span residues 196-229, 232-265, 271-304, 415-448, 450-483, 484-517, 518-551, 552-585, 586-619, 620-653, and 654-687; these read YSVL…KMFS, GRLK…IPSV, IKIM…APSL, NDLE…DSRV, SAAA…DRYN, PSAL…DSSC, TEAL…LRNS, AQVL…VPTD, SQAL…FPSN, IEVI…QPTQ, and VKWQ…FPEN. Basic and acidic residues predominate over residues 721-731; sequence EMREQRIKSGR. Residues 721 to 824 are disordered; that stretch reads EMREQRIKSG…EELGDDLLPE (104 aa). Residues 748 to 757 show a composition bias toward polar residues; that stretch reads DSGQNNSASS. Residues 797 to 808 are compositionally biased toward basic and acidic residues; it reads ERPKTAAKKRID. The span at 809–824 shows a compositional bias: acidic residues; sequence EDDFADEELGDDLLPE.

In terms of assembly, component of the IFT complex B, at least composed of IFT20, IFT22, IFT25, IFT27, IFT46, IFT52, TRAF3IP1/IFT54, IFT57, IFT74, IFT80, IFT81, and IFT88. Interacts with IFT20, IFT22, IFT25, IFT27, IFT52, TRAF3IP1, IFT74, IFT80 and IFT81. Interacts with IFT172. Interacts with IFT57. Interacts with IFT46. Interacts with IFT70B. Interacts with C2CD3. Interacts with ENTR1 (via N-terminus). Interacts with LRRC56. Interacts with DZIP1. Interacts with CCDC38. Interacts with CCDC146. Interacts with CFAP53. As to expression, testis.

The protein resides in the cytoplasm. The protein localises to the cytoskeleton. It is found in the microtubule organizing center. It localises to the centrosome. Its subcellular location is the centriole. The protein resides in the cilium basal body. The protein localises to the cell projection. It is found in the cilium. It localises to the flagellum. In terms of biological role, positively regulates primary cilium biogenesis. Also involved in autophagy since it is required for trafficking of ATG16L and the expansion of the autophagic compartment. This is Intraflagellar transport protein 88 homolog (Ift88) from Mus musculus (Mouse).